A 219-amino-acid polypeptide reads, in one-letter code: Chloramphenicol acetyltransferase (219 aa).

Histidine 190 serves as the catalytic Proton acceptor.

Belongs to the chloramphenicol acetyltransferase family. Homotrimer.

It catalyses the reaction chloramphenicol + acetyl-CoA = chloramphenicol 3-acetate + CoA. In terms of biological role, this enzyme is an effector of chloramphenicol resistance in bacteria. This chain is Chloramphenicol acetyltransferase (catB), found in Clostridium butyricum.